A 346-amino-acid chain; its full sequence is T-box protein 12 (346 aa).

The segment covering 33 to 48 (DEEDVEVDVEDVDDVD) has biased composition (acidic residues). Residues 33–66 (DEEDVEVDVEDVDDVDLSSIPSKSPERSRGRPKI) are disordered. The segment at residues 86–268 (LWAKFFDLGT…KNPFAKGFRD (183 aa)) is a DNA-binding region (T-box).

Its subcellular location is the nucleus. Functionally, transcription factor. Involved in cell fate determination; required to pattern the posterior hindgut. Involved in motor neuron fate determination and maintenance, acting as a transcriptional repressor to counteract gene activation by transcription factor unc-3 in a subset of motor neurons. Required throughout development to repress transcription by unc-3, probably acting by binding to specific promoter elements. Represses expression of VA and VB motor neuron-specific effector genes, such as DEG/ENaC channel del-1 and the innexin inx-12, in DA and DB motor neurons. Represses expression of transcription factor bnc-1, perhaps acting directly, in DA and DB motor neurons. This is T-box protein 12 (mab-9) from Caenorhabditis elegans.